We begin with the raw amino-acid sequence, 106 residues long: Large ribosomal subunit protein uL24 (106 aa).

Belongs to the universal ribosomal protein uL24 family. As to quaternary structure, part of the 50S ribosomal subunit.

Functionally, one of two assembly initiator proteins, it binds directly to the 5'-end of the 23S rRNA, where it nucleates assembly of the 50S subunit. In terms of biological role, one of the proteins that surrounds the polypeptide exit tunnel on the outside of the subunit. The protein is Large ribosomal subunit protein uL24 of Desulforudis audaxviator (strain MP104C).